The primary structure comprises 303 residues: Vacuolar protein sorting-associated protein 26B (303 aa).

Belongs to the VPS26 family. As to quaternary structure, component of the retromer complex which consists of VPS29 (MAG1), VPS26 (VPS26A or VPS26B), VPS35 (VPS35A or VPS35B or VPS35C), VPS5/17 (SNX1 or SNX2A or SNX2B). Component of a retromer subcomplex consisting of VPS29 (MAG1), VPS26 (VPS26A or VPS26B), VPS35 (VPS35A or VPS35B or VPS35C).

The protein localises to the cytoplasm. It localises to the endosome membrane. The protein resides in the prevacuolar compartment membrane. It is found in the golgi apparatus. Its subcellular location is the trans-Golgi network membrane. Its function is as follows. Plays a role in vesicular protein sorting. Component of the membrane-associated retromer complex which is essential in endosome-to-Golgi retrograde transport. The VPS29-VPS26-VPS35 subcomplex may be involved in recycling of specific cargos from endosome to the plasma membrane. This chain is Vacuolar protein sorting-associated protein 26B (VPS26B), found in Arabidopsis thaliana (Mouse-ear cress).